A 66-amino-acid polypeptide reads, in one-letter code: Cold shock protein CspD (66 aa).

Positions 4 to 63 (GKVKWFNNEKGFGFIEVEGGDDVFVHFTAIEGDGYKSLEEGQEVSFEIVEGNRGPQASNV) constitute a CSD domain.

The protein resides in the cytoplasm. This is Cold shock protein CspD (cspD) from Bacillus subtilis (strain 168).